Reading from the N-terminus, the 309-residue chain is MSNVGQQLLSGGLSGLATTVCLQPFDLLKTRLQQGDGSTWRPTRPHTSIILDITRDVIHSGGWRGLWRGTTPSLVRNVPGVALYMTSLTQLRALMATSPYFASLRRRPQNGDANKNTSSVLPKLTSQGNLIAGATTRVGVGFLLNPFSVLKARFESNIYAYESLTGAFGTIVRQGPSELLRGFLASSLRDAPYAGLFVVFYEGIKHEASYVLPPVTSTQATLIHGLSAASAGAIATMATHPFDVIKTKIQVRTEAQYHGFLTTIATIWKQRGITGYFDGASLRMSRKVLSSAIGWAVYEGGLMLMRTST.

Solcar repeat units follow at residues 2 to 94 (SNVG…LRAL), 124 to 207 (LTSQ…IKHE), and 219 to 304 (QATL…GLML). The next 6 membrane-spanning stretches (helical) occupy residues 8 to 33 (LLSGGLSGLATTVCLQPFDLLKTRLQ), 69 to 95 (GTTPSLVRNVPGVALYMTSLTQLRALM), 130 to 155 (LIAGATTRVGVGFLLNPFSVLKARFE), 182 to 205 (GFLASSLRDAPYAGLFVVFYEGIK), 223 to 249 (IHGLSAASAGAIATMATHPFDVIKTKI), and 279 to 297 (GASLRMSRKVLSSAIGWAV).

This sequence belongs to the mitochondrial carrier (TC 2.A.29) family. SLC25A38 subfamily.

It localises to the mitochondrion inner membrane. It carries out the reaction glycine(in) = glycine(out). Functionally, mitochondrial glycine transporter that imports glycine into the mitochondrial matrix. Plays an important role in providing glycine for the first enzymatic step in heme biosynthesis, the condensation of glycine with succinyl-CoA to produce 5-aminolevulinate (ALA) in the mitochondrial matrix. In Laccaria bicolor (strain S238N-H82 / ATCC MYA-4686) (Bicoloured deceiver), this protein is Mitochondrial glycine transporter.